The following is a 203-amino-acid chain: Thymidylate kinase (203 aa).

ATP is bound at residue glycine 10–serine 17.

It belongs to the thymidylate kinase family.

The enzyme catalyses dTMP + ATP = dTDP + ADP. Phosphorylation of dTMP to form dTDP in both de novo and salvage pathways of dTTP synthesis. The sequence is that of Thymidylate kinase from Dichelobacter nodosus (strain VCS1703A).